The primary structure comprises 233 residues: Biosynthetic peptidoglycan transglycosylase (233 aa).

Residues 17-37 form a helical membrane-spanning segment; it reads IVLAVLALVILPYALIFFYVL.

The protein belongs to the glycosyltransferase 51 family.

The protein localises to the cell inner membrane. It catalyses the reaction [GlcNAc-(1-&gt;4)-Mur2Ac(oyl-L-Ala-gamma-D-Glu-L-Lys-D-Ala-D-Ala)](n)-di-trans,octa-cis-undecaprenyl diphosphate + beta-D-GlcNAc-(1-&gt;4)-Mur2Ac(oyl-L-Ala-gamma-D-Glu-L-Lys-D-Ala-D-Ala)-di-trans,octa-cis-undecaprenyl diphosphate = [GlcNAc-(1-&gt;4)-Mur2Ac(oyl-L-Ala-gamma-D-Glu-L-Lys-D-Ala-D-Ala)](n+1)-di-trans,octa-cis-undecaprenyl diphosphate + di-trans,octa-cis-undecaprenyl diphosphate + H(+). The protein operates within cell wall biogenesis; peptidoglycan biosynthesis. Its function is as follows. Peptidoglycan polymerase that catalyzes glycan chain elongation from lipid-linked precursors. This Rhizobium leguminosarum bv. trifolii (strain WSM2304) protein is Biosynthetic peptidoglycan transglycosylase.